The following is a 1096-amino-acid chain: Serine-repeat antigen protein 3 (1096 aa).

The signal sequence occupies residues 1–21 (MARLSSIVFIICLLLCNNAIS). The interval 28 to 205 (PSSGGTLSGG…RSPPPQVNNI (178 aa)) is disordered. A compositionally biased stretch (low complexity) spans 77–97 (NSDSTGDSSLGSTGSNGSQPA). Asparagine 92 carries N-linked (GlcNAc...) asparagine glycosylation. A compositionally biased stretch (basic and acidic residues) spans 102 to 113 (KEPEPTTPKEPE). The span at 123-147 (VTPQKTAETASGKQVSPTPSENPPS) shows a compositional bias: polar residues. Positions 149 to 161 (DTPKPESSSEKKV) are enriched in basic and acidic residues. Asparagine 204, asparagine 607, asparagine 637, asparagine 662, asparagine 671, asparagine 712, asparagine 892, and asparagine 951 each carry an N-linked (GlcNAc...) asparagine glycan. 2 disordered regions span residues 916–952 (EAKNDDENDQNYGNLDVSGQSENHQNDPKNPQPQANS) and 964–1006 (NQRT…ASAN). Composition is skewed to polar residues over residues 925–952 (QNYGNLDVSGQSENHQNDPKNPQPQANS) and 964–975 (NQRTADSNPNAQ). A compositionally biased stretch (low complexity) spans 976 to 1006 (STPSPNTTVTDTVNSNTANSNTANSNTASAN). 2 N-linked (GlcNAc...) asparagine glycosylation sites follow: asparagine 981 and asparagine 1039.

Belongs to the peptidase C1 family. Post-translationally, proteolytically cleaved in both blood and liver stage parasites. Precursor of 130 kDa is processed into 72 kDa and 55 kDa forms. Proteolytically cleaved by SUB1.

Its subcellular location is the cell membrane. It localises to the parasitophorous vacuole. The protein localises to the secreted. It is found in the host cytoplasm. Putative cysteine protease. Probably involved in merozoite release from the parasitophorous vacuole during liver stages. The sequence is that of Serine-repeat antigen protein 3 from Plasmodium berghei (strain Anka).